Here is an 85-residue protein sequence, read N- to C-terminus: MAHKKAGGSTRNGRDSESKRLGVKMYGGQVIKPGNIIVRQRGTEFHAGYGVGMGKDHTLFAKIEGVIKFEKKGEFMRRYVSIVAA.

Residues Met1 to Leu21 are disordered.

It belongs to the bacterial ribosomal protein bL27 family.

This Pseudomonas entomophila (strain L48) protein is Large ribosomal subunit protein bL27.